The chain runs to 121 residues: Small ribosomal subunit protein uS10 (121 aa).

N-acetylserine is present on Ser2. Glycyl lysine isopeptide (Lys-Gly) (interchain with G-Cter in ubiquitin) cross-links involve residues Lys6, Lys8, Lys21, Lys32, and Lys101.

This sequence belongs to the universal ribosomal protein uS10 family. Component of the small ribosomal subunit (SSU). Mature yeast ribosomes consist of a small (40S) and a large (60S) subunit. The 40S small subunit contains 1 molecule of ribosomal RNA (18S rRNA) and 33 different proteins (encoded by 57 genes). The large 60S subunit contains 3 rRNA molecules (25S, 5.8S and 5S rRNA) and 46 different proteins (encoded by 81 genes). In terms of processing, ubiquitinated at Lys-6 and Lys-8 by HEL2, to activate the ribosome quality control (RQC) pathway in response to stalled ribosomes. Post-translationally, N-terminally acetylated by acetyltransferase NatA. Also partially acetylated by NatC.

It localises to the cytoplasm. Its function is as follows. Component of the ribosome, a large ribonucleoprotein complex responsible for the synthesis of proteins in the cell. The small ribosomal subunit (SSU) binds messenger RNAs (mRNAs) and translates the encoded message by selecting cognate aminoacyl-transfer RNA (tRNA) molecules. The large subunit (LSU) contains the ribosomal catalytic site termed the peptidyl transferase center (PTC), which catalyzes the formation of peptide bonds, thereby polymerizing the amino acids delivered by tRNAs into a polypeptide chain. The nascent polypeptides leave the ribosome through a tunnel in the LSU and interact with protein factors that function in enzymatic processing, targeting, and the membrane insertion of nascent chains at the exit of the ribosomal tunnel. This chain is Small ribosomal subunit protein uS10, found in Saccharomyces cerevisiae (strain ATCC 204508 / S288c) (Baker's yeast).